Here is a 550-residue protein sequence, read N- to C-terminus: MTKLLEINHIQTLCFAKGFSPARLNVATSPFRISRRGGGGYCSNACIPYRLKFTCYATLSAVVKEQASDFSGKEAALLVDELRSNFNSGRTKSYEWRISQLQNIARMIDEKEKCITEALYQDLSKPELEAFLAEISNTKSSCMLAIKELKNWMAPETVKTSVTTFPSSAQIVSEPLGVVLVISAWNFPFLLSVEPVIGAIAAGNAVVLKPSEIAPAASSLLAKLFSEYLDNTTIRVIEGGVPETTALLDQKWDKIFFTGGARVARIIMAAAARNLTPVVLELGGKCPALVDSDVNLQVAARRIIAGKWACNSGQACIGVDYVITTKDFASKLIDALKTELETFFGQNALESKDLSRIVNSFHFKRLESMLKENGVANKIVHGGRITEDKLKISPTILLDVPEASSMMQEEIFGPLLPIITVQKIEDGFQVIRSKPKPLAAYLFTNNKELEKQFVQDVSAGGITINDTVLHVTVKDLPFGGVGESGIGAYHGKFSYETFSHKKGVLYRSFSGDADLRYPPYTPKKKMVLKALLSSNIFAAILAFFGFSKDS.

A chloroplast-targeting transit peptide spans 1 to 59 (MTKLLEINHIQTLCFAKGFSPARLNVATSPFRISRRGGGGYCSNACIPYRLKFTCYATL). 259 to 264 (GGARVA) provides a ligand contact to NAD(+). Glutamate 281 acts as the Proton acceptor in catalysis. Cysteine 316 serves as the catalytic Nucleophile.

This sequence belongs to the aldehyde dehydrogenase family. As to quaternary structure, homodimer and homomultimer.

It is found in the plastid. It localises to the chloroplast. It catalyses the reaction an aldehyde + NAD(+) + H2O = a carboxylate + NADH + 2 H(+). With respect to regulation, thiol-based regulation. Inactivation after dimerization under oxidizing conditions. In terms of biological role, involved in oxidative stress tolerance by detoxifying reactive aldehydes derived from lipid peroxidation. Medium- to long-chain saturated aldehydes are preferred substrates, while the short-chain aldehyde propanal is a weak substrate. Can use both NAD(+) and NADP(+), but the coenzyme preference is substrate dependent. This chain is Aldehyde dehydrogenase family 3 member I1, chloroplastic (ALDH3I1), found in Arabidopsis thaliana (Mouse-ear cress).